Here is a 161-residue protein sequence, read N- to C-terminus: MIVEGPVLKYGDKIDTDIIIPARHLKYTDPAYLAQHAMEPLDPEFYKKASKGVVIVAGKVFGMGSSREQAAIALKAAGVKAVIAESFARIFYRNCINNGLPLITLPNATKEINEGDVVKINVETGEITVNGRVLKGKGITGMALDILKSGGIMEYLKKVSA.

The protein belongs to the LeuD family. LeuD type 2 subfamily. As to quaternary structure, heterodimer of LeuC and LeuD.

It catalyses the reaction (2R,3S)-3-isopropylmalate = (2S)-2-isopropylmalate. It functions in the pathway amino-acid biosynthesis; L-leucine biosynthesis; L-leucine from 3-methyl-2-oxobutanoate: step 2/4. Its function is as follows. Catalyzes the isomerization between 2-isopropylmalate and 3-isopropylmalate, via the formation of 2-isopropylmaleate. This Metallosphaera sedula (strain ATCC 51363 / DSM 5348 / JCM 9185 / NBRC 15509 / TH2) protein is 3-isopropylmalate dehydratase small subunit.